We begin with the raw amino-acid sequence, 445 residues long: Probable D-serine dehydratase (445 aa).

Lys116 is subject to N6-(pyridoxal phosphate)lysine.

This sequence belongs to the serine/threonine dehydratase family. DsdA subfamily. Pyridoxal 5'-phosphate is required as a cofactor.

The enzyme catalyses D-serine = pyruvate + NH4(+). This Bacillus mycoides (strain KBAB4) (Bacillus weihenstephanensis) protein is Probable D-serine dehydratase.